A 216-amino-acid polypeptide reads, in one-letter code: MLEIFDVNHTLLSETKSGELFTLRKETFKDRLNWAVQCTDGMEFDQYDNNNTTYLFGIKDNTVICSLRFIETKYPNMITGTFFPYFKEINIPEGNYLESSRFFVDKSRAKDILGNEYPISSMLFLSMINYSKDKGYDGIYTIVSHPMLTILKRSGWGIRVVEQGLSEKEERVYLVFLPVDDENQEALARRINRSGTFMSNELKQWPLRVPAAIAQA.

Belongs to the autoinducer synthase family.

It carries out the reaction a fatty acyl-[ACP] + S-adenosyl-L-methionine = an N-acyl-L-homoserine lactone + S-methyl-5'-thioadenosine + holo-[ACP] + H(+). Required for the synthesis of OHHL (N-(3-oxohexanoyl)-L-homoserine lactone), an autoinducer molecule which binds to CarR and thus acts in the control of the biosynthesis of carbapenem antibiotics. This chain is Acyl-homoserine-lactone synthase (carI), found in Pectobacterium carotovorum subsp. carotovorum (Erwinia carotovora subsp. carotovora).